The chain runs to 308 residues: Atrochrysone carboxyl ACP thioesterase (308 aa).

Histidine 99, histidine 101, aspartate 103, and histidine 104 together coordinate Zn(2+). Aspartate 103 acts as the Proton donor/acceptor in catalysis.

Belongs to the metallo-beta-lactamase superfamily. Zn(2+) is required as a cofactor.

It carries out the reaction atrochrysone carboxyl-[ACP] + H2O = atrochrysone carboxylate + holo-[ACP] + H(+). The protein operates within secondary metabolite biosynthesis. Its function is as follows. Atrochrysone carboxyl ACP thioesterase; part of the gene cluster that mediates the biosynthesis of physcion, a natural anthraquinone fungicide that can prevent plant fungal infections. The pathway begins with the polyketide synthase AcPKS that condenses 8 malonyl-CoA units to synthesize atrochrysone thioester which is released from the synthase by the atrochrysone carboxyl ACP thioesterase AcTE that breaks the thioester bond and leads to free atrochrysone carboxylic acid. Spontaneous decarboxylation of atrochrysone carboxylic acid leads to the formation of atrochrysone. Then, atrochrysone undergoes spontaneous dehydration and oxidation, giving the products emodin anthrone and emodin. The O-methyltransferase AcOMT then methylates the C-6 hydroxyl of emodin to form physcion. This Aspergillus chevalieri (Eurotium chevalieri) protein is Atrochrysone carboxyl ACP thioesterase.